Reading from the N-terminus, the 101-residue chain is Protamine-3 (101 aa).

The tract at residues 1-101 is disordered; that stretch reads MGSRCAKLST…PSPEPKQTHS (101 aa). Residues 45 to 67 are compositionally biased toward acidic residues; the sequence is EGEEEEEDEEEEEEEEEEEEEEQ. Phosphoserine is present on serine 93.

It belongs to the protamine P3 family. As to expression, testis.

Its subcellular location is the nucleus. It localises to the chromosome. Its function is as follows. Protamines substitute for histones in the chromatin of sperm during the haploid phase of spermatogenesis. They compact sperm DNA into a highly condensed, stable and inactive complex. In Mus musculus (Mouse), this protein is Protamine-3 (Prm3).